The primary structure comprises 1269 residues: Protein flightless-1 homolog (1269 aa).

An N-acetylmethionine modification is found at M1. The interaction with LRRFIP1 and LRRFIP2 stretch occupies residues 1–427 (MEATGVLPFV…SGPKDPMARK (427 aa)). 16 LRR repeats span residues 7–32 (LPFV…VKAM), 33–55 (TSLR…LAAL), 56–78 (QKLE…LSSL), 80–103 (SLRA…IFKL), 104–126 (DDLS…LENA), 127–149 (KNML…LFIN), 150–173 (LTDL…MRRL), 175–196 (HLQT…QLPA), 197–222 (MTAL…LEGL), 223–245 (SNLA…LYTL), 247–268 (SLRR…IDQW), 269–291 (VHVE…ICKL), 293–316 (KLKK…IGKL), 318–339 (NLEE…LCRC), 340–363 (PKLR…HFLT), and 365–385 (IEVL…PADR). Residue K21 is modified to N6-acetyllysine. S406 is modified (phosphoserine). Phosphoserine; by SGK3 is present on S436. Positions 452–473 (VAQEKNKKQEESADARAPSGKV) are disordered. Over residues 453 to 465 (AQEKNKKQEESAD) the composition is skewed to basic and acidic residues. The interaction with ACTL6A stretch occupies residues 495–827 (VGQLPGLTIW…TVSRSLEGTE (333 aa)). Gelsolin-like repeat units follow at residues 509 to 591 (FVPV…EEFL), 629 to 703 (NIKL…PEFW), and 758 to 831 (ELMP…AQVF). The residue at position 818 (T818) is a Phosphothreonine; by SGK3. Residues S856 and S860 each carry the phosphoserine modification. The interval 951–975 (KKEDKEEKAEGKEGEEATAEAEEKQ) is disordered. The segment covering 952–965 (KEDKEEKAEGKEGE) has biased composition (basic and acidic residues). A compositionally biased stretch (acidic residues) spans 966 to 975 (EATAEAEEKQ). 2 Gelsolin-like repeats span residues 1075-1143 (TDSS…PENF) and 1181-1254 (KCSD…QHAF).

As to quaternary structure, interacts with actin, ACTL6A, NCOA2 and CARM1. Interacts with LRRFIP1, LRRFIP2 and MYD88. Upon LPS stimulation, LRRFIP2 competes for MYD88-binding. LRRFIP1 constitutively blocks the interaction with MyD88, even in the absence of LPS. Interacts with the nuclear receptors ESR1 and THRB. Interacts with SGK3. Interacts (via the gelsolin-like region) with TMOD1. Interacts with (via the gelsolin-like region) TMOD3. Interacts with LMOD2, VCL, GSN and DES. As to expression, strongest expression in skeletal muscle with high expression also in the heart and lung.

It localises to the nucleus. Its subcellular location is the cytoplasm. It is found in the cytoskeleton. The protein localises to the microtubule organizing center. The protein resides in the centrosome. It localises to the cell projection. Its subcellular location is the podosome. It is found in the cell junction. The protein localises to the focal adhesion. Its function is as follows. Is a regulator of actin polymerization, required for proper myofibril organization and regulation of the length of sarcomeric thin filaments. It also plays a role in the assembly of cardiomyocyte cell adhesion complexes. Regulates cytoskeletal rearrangements involved in cytokinesis and cell migration, by inhibiting Rac1-dependent paxillin phosphorylation. May play a role as coactivator in transcriptional activation by hormone-activated nuclear receptors (NR) and acts in cooperation with NCOA2 and CARM1. Involved in estrogen hormone signaling. The sequence is that of Protein flightless-1 homolog (FLII) from Homo sapiens (Human).